Reading from the N-terminus, the 593-residue chain is Autophagy-related protein 22-2 (593 aa).

Residues 42–62 form a helical membrane-spanning segment; the sequence is YGVAAEVFAVCGVGSFLPLTL. Asparagine 90 carries N-linked (GlcNAc...) asparagine glycosylation. A run of 3 helical transmembrane segments spans residues 112–132, 159–179, and 181–201; these read SFAM…LVSF, LFML…VIGV, and CLGS…ANDP. Residues 228–261 are disordered; it reads SWTDEEDTGDHAGPAGSKKAVEPEKASSSTSPEL. Transmembrane regions (helical) follow at residues 271–291, 305–325, 377–397, and 415–435; these read GVGL…LLLF, LPLR…TVVC, VVVF…VSGT, and LLSI…PIVA. The N-linked (GlcNAc...) asparagine glycan is linked to asparagine 443. 4 consecutive transmembrane segments (helical) span residues 448 to 468, 480 to 500, 525 to 545, and 548 to 568; these read LCIA…IPFI, WEIF…ASYC, KGSS…TGSV, and GFIF…LVNA.

Belongs to the ATG22 family.

It is found in the vacuole membrane. Its function is as follows. Vacuolar effluxer which mediate the efflux of amino acids resulting from autophagic degradation. The release of autophagic amino acids allows the maintenance of protein synthesis and viability during nitrogen starvation. This Emericella nidulans (strain FGSC A4 / ATCC 38163 / CBS 112.46 / NRRL 194 / M139) (Aspergillus nidulans) protein is Autophagy-related protein 22-2 (atg22-2).